The sequence spans 206 residues: Ribosomal RNA small subunit methyltransferase G (206 aa).

Residues glycine 71, phenylalanine 76, 122–123 (AE), and arginine 135 each bind S-adenosyl-L-methionine.

This sequence belongs to the methyltransferase superfamily. RNA methyltransferase RsmG family.

It is found in the cytoplasm. In terms of biological role, specifically methylates the N7 position of a guanine in 16S rRNA. The chain is Ribosomal RNA small subunit methyltransferase G from Bacteroides fragilis (strain ATCC 25285 / DSM 2151 / CCUG 4856 / JCM 11019 / LMG 10263 / NCTC 9343 / Onslow / VPI 2553 / EN-2).